Reading from the N-terminus, the 1125-residue chain is Tip elongation aberrant protein 3 (1125 aa).

5 Kelch repeats span residues 73-123 (FMYL…CSAD), 124-179 (TIYL…LVDS), 181-226 (LWIF…KANM), 259-308 (KIFV…TIDD), and 310-360 (VYIY…SKNN). Phosphoserine occurs at positions 430, 437, 460, 523, 980, 982, 983, 984, 1078, and 1080. The interval 507–530 (PLPNGNDTISRSSESSSPINESES) is disordered. A compositionally biased stretch (low complexity) spans 515-530 (ISRSSESSSPINESES).

It is found in the cell tip. Its function is as follows. Acts as a cell end marker required for efficient new end take-off (NETO), whereby growth is activated at the cell end to generate bipolarity in extending cells. Also required for proper placement of the septum. The sequence is that of Tip elongation aberrant protein 3 (tea3) from Schizosaccharomyces pombe (strain 972 / ATCC 24843) (Fission yeast).